The chain runs to 1259 residues: Cingulin (1259 aa).

Residues 9–324 (MADQPIPVGQ…EKFPSLQAQP (316 aa)) form a head region. A ZIM motif is present at residues 41 to 55 (QDSYGVAVRVQGIDG). Residues 69–79 (SSYDYDRHYSE) show a composition bias toward basic and acidic residues. Disordered regions lie at residues 69–151 (SSYD…IDTK), 169–232 (VRGR…RQSL), 317–338 (FPSL…KKEL), 941–969 (KSRR…NSSR), and 1192–1259 (REME…TSSC). Positions 80–100 (RSSTLDTAYSQSSRESAWSRG) are enriched in polar residues. The span at 117 to 127 (SATSQQSTSAS) shows a compositional bias: low complexity. Positions 128-145 (NKTNKNGLSTSSFSNQSS) are enriched in polar residues. A compositionally biased stretch (basic and acidic residues) spans 179-204 (ALKDERKRSQSLDGRKNYQDTADSRE). Positions 220 to 229 (VSSANRSFAR) are enriched in polar residues. Residues 325-1218 (GEDTRSLGSQ…KTMEKESKRK (894 aa)) adopt a coiled-coil conformation. Basic and acidic residues predominate over residues 326–338 (EDTRSLGSQKKEL). Residues 1220 to 1259 (IRPAHNDDDDLSSDGEYGGSYDPSSITSLLTESNLQTSSC) form a tail region. Polar residues predominate over residues 1241 to 1259 (DPSSITSLLTESNLQTSSC).

The protein belongs to the cingulin family. In terms of assembly, parallel homodimer. Interacts with TJP1/ZO1 and TJP2/ZO2.

It is found in the cell junction. The protein localises to the tight junction. Its function is as follows. Probably plays a role in the formation and regulation of the tight junction (TJ) paracellular permeability barrier, possibly by linking ZO proteins to the actomyosin cytoskeleton. This Xenopus tropicalis (Western clawed frog) protein is Cingulin.